The chain runs to 631 residues: Polyadenylate-binding protein 3 (631 aa).

RRM domains follow at residues 11 to 89 (ASLY…WSQR), 99 to 175 (GNIF…QFKS), 191 to 268 (PNVY…RAQK), and 294 to 370 (VNLY…LAQR). Y140 is subject to Phosphotyrosine. The residue at position 315 (S315) is a Phosphoserine. An N6,N6-dimethyllysine; alternate modification is found at K361. K361 participates in a covalent cross-link: Glycyl lysine isopeptide (Lys-Gly) (interchain with G-Cter in SUMO2); alternate. A Phosphotyrosine modification is found at Y364. Omega-N-methylarginine occurs at positions 426, 430, and 449. R501 is modified (dimethylated arginine). Omega-N-methylarginine is present on R513. The region spanning 537 to 614 (QETLTASRLA…AVAVLQAHQA (78 aa)) is the PABC domain.

This sequence belongs to the polyadenylate-binding protein type-1 family. As to expression, testis specific.

The protein resides in the cytoplasm. Functionally, binds the poly(A) tail of mRNA. May be involved in cytoplasmic regulatory processes of mRNA metabolism. Binds poly(A) with a slightly lower affinity as compared to PABPC1. This chain is Polyadenylate-binding protein 3 (PABPC3), found in Homo sapiens (Human).